A 224-amino-acid chain; its full sequence is 7-cyano-7-deazaguanine synthase (224 aa).

8–18 (LSGGMDSAAVI) serves as a coordination point for ATP. The Zn(2+) site is built by cysteine 186, cysteine 196, cysteine 199, and cysteine 202.

The protein belongs to the QueC family. Requires Zn(2+) as cofactor.

The catalysed reaction is 7-carboxy-7-deazaguanine + NH4(+) + ATP = 7-cyano-7-deazaguanine + ADP + phosphate + H2O + H(+). Its pathway is purine metabolism; 7-cyano-7-deazaguanine biosynthesis. Its function is as follows. Catalyzes the ATP-dependent conversion of 7-carboxy-7-deazaguanine (CDG) to 7-cyano-7-deazaguanine (preQ(0)). The chain is 7-cyano-7-deazaguanine synthase from Xanthomonas oryzae pv. oryzae (strain MAFF 311018).